The sequence spans 105 residues: MIASKFGIGQQVRHSLLGYLGVVVDIDPEYSLDEPSPDELAVNDELRAAPWYHVVMEDDDGQPVHTYLAEAQLRSEMRDEHPEQPSMDELARTIRKQLQAPRLRN.

Residues 76–105 (EMRDEHPEQPSMDELARTIRKQLQAPRLRN) form a disordered region.

It belongs to the HspQ family.

It localises to the cytoplasm. Functionally, involved in the degradation of certain denaturated proteins, including DnaA, during heat shock stress. In Salmonella agona (strain SL483), this protein is Heat shock protein HspQ.